A 142-amino-acid chain; its full sequence is Fluoride-specific ion channel FluC 1 (142 aa).

4 helical membrane passes run 17–37 (AWVS…GLAL), 42–62 (GFPF…GFYA), 80–100 (FVMT…LETF), and 109–129 (YIAL…VWLG). 2 residues coordinate Na(+): glycine 87 and threonine 90.

It belongs to the fluoride channel Fluc/FEX (TC 1.A.43) family.

The protein resides in the cell inner membrane. It carries out the reaction fluoride(in) = fluoride(out). With respect to regulation, na(+) is not transported, but it plays an essential structural role and its presence is essential for fluoride channel function. In terms of biological role, fluoride-specific ion channel. Important for reducing fluoride concentration in the cell, thus reducing its toxicity. This chain is Fluoride-specific ion channel FluC 1, found in Bradyrhizobium diazoefficiens (strain JCM 10833 / BCRC 13528 / IAM 13628 / NBRC 14792 / USDA 110).